A 596-amino-acid polypeptide reads, in one-letter code: Ubiquilin-4 (596 aa).

Residues 13–87 (IRVTVKTPKD…VHLVIKTPQK (75 aa)) enclose the Ubiquitin-like domain. Residues K23 and K62 each participate in a glycyl lysine isopeptide (Lys-Gly) (interchain with G-Cter in SUMO2) cross-link. Positions 89 to 148 (QDPVTAAASPPSTPDSASAPSTTPASPAAAPVQPCSSGNTTSDAGSGGGPSPVAAEGPSS) are disordered. 2 stretches are compositionally biased toward low complexity: residues 93 to 119 (TAAA…AAAP) and 139 to 148 (SPVAAEGPSS). S139 carries the phosphoserine modification. STI1 domains lie at 187–224 (NPEM…QQLM) and 225–256 (ERNP…MQEM). T282 is modified (phosphothreonine). Positions 297 to 361 (GNNPFSSLAG…QVHPTVSNPF (65 aa)) are disordered. Over residues 302 to 313 (SSLAGNSDNSSS) the composition is skewed to low complexity. S313 carries the post-translational modification Phosphoserine. Over residues 324–335 (LPNPWSPSPPTS) the composition is skewed to pro residues. The segment covering 339–349 (GSGGEGTGGSG) has biased composition (gly residues). The span at 352–361 (QVHPTVSNPF) shows a compositional bias: polar residues. 2 consecutive STI1 domains span residues 388–435 (NPQL…QEQL) and 439–471 (LPVF…QQGL). The disordered stretch occupies residues 482-528 (VPSLGSFGTPRTSVPLAGSNSGSSAEAPTSSPGVPATSPPSAGSNAQ). The segment covering 499–513 (GSNSGSSAEAPTSSP) has biased composition (polar residues). Residues 548-593 (PMPEVRFQQQLEQLNSMGFINREANLQALIATGGDINAAIERLLGS) form the UBA domain.

As to quaternary structure, homooligomer. Binds signal sequences of proteins that are targeted to the endoplasmic reticulum. Interacts (via UBA domain) with GJA1 (not ubiquitinated) and with ubiquitin; both compete for the same binding site. Interacts (via UBA domain) with ubiquitin and with polyubiquitin chains. Interacts (via ubiquitin-like domain) with PSMD2 and PSMD4, regulatory subunits of the 26S proteasome. Interacts with ATXN1/SCA1; interaction with ATXN1 inhibits polyubiquitination of UBQLN4 and interferes with PSMD4 binding. Interacts with HERPUD1. Interacts (via ubiquitin-like domain) with UBQLN1 (via UBA domain). Interacts with UBQLN2. Interacts (via STI1 1 and 2 domains) with MAP1LC3A/B/C. Interacts with BAG6. Interacts with MRE11 (when ubiquitinated); interaction with ubiquitinated MRE11 leads to MRE11 removal from chromatin. Interacts with DESI1/POST; leading to nuclear export. Interacts with BCL2A1 and BCL2L10. In terms of processing, phosphorylated by ATM at Ser-313 in response to DNA damage, leading to localization in the nucleus and recruitment to sites of DNA damage. Post-translationally, ubiquitinated; this does not lead to proteasomal degradation. May undergo both 'Lys-48'- and 'Lys-63'-linked polyubiquitination. Detected in testis, ovary, thyroid, kidney, thymus, heart, liver, lung and spleen (at protein level). Highly expressed in heart, skeletal muscle, kidney, liver and brain. Detected at lower levels in testis, lung and spleen.

The protein resides in the nucleus. The protein localises to the cytoplasm. It is found in the chromosome. Its subcellular location is the endoplasmic reticulum. It localises to the perinuclear region. The protein resides in the cytoplasmic vesicle. The protein localises to the autophagosome. In terms of biological role, regulator of protein degradation that mediates the proteasomal targeting of misfolded, mislocalized or accumulated proteins. Acts by binding polyubiquitin chains of target proteins via its UBA domain and by interacting with subunits of the proteasome via its ubiquitin-like domain. Key regulator of DNA repair that represses homologous recombination repair: in response to DNA damage, recruited to sites of DNA damage following phosphorylation by ATM and acts by binding and removing ubiquitinated MRE11 from damaged chromatin, leading to MRE11 degradation by the proteasome. MRE11 degradation prevents homologous recombination repair, redirecting double-strand break repair toward non-homologous end joining (NHEJ). Specifically recognizes and binds mislocalized transmembrane-containing proteins and targets them to proteasomal degradation. Collaborates with DESI1/POST in the export of ubiquitinated proteins from the nucleus to the cytoplasm. Plays a role in the regulation of the proteasomal degradation of non-ubiquitinated GJA1. Acts as an adapter protein that recruits UBQLN1 to the autophagy machinery. Mediates the association of UBQLN1 with autophagosomes and the autophagy-related protein LC3 (MAP1LC3A/B/C) and may assist in the maturation of autophagosomes to autolysosomes by mediating autophagosome-lysosome fusion. This is Ubiquilin-4 from Mus musculus (Mouse).